Here is a 365-residue protein sequence, read N- to C-terminus: Uroporphyrinogen decarboxylase (365 aa).

Residues 27–31 (RQAGR), D77, Y154, S209, and H327 contribute to the substrate site.

The protein belongs to the uroporphyrinogen decarboxylase family. Homodimer.

The protein resides in the cytoplasm. It carries out the reaction uroporphyrinogen III + 4 H(+) = coproporphyrinogen III + 4 CO2. It participates in porphyrin-containing compound metabolism; protoporphyrin-IX biosynthesis; coproporphyrinogen-III from 5-aminolevulinate: step 4/4. In terms of biological role, catalyzes the decarboxylation of four acetate groups of uroporphyrinogen-III to yield coproporphyrinogen-III. This is Uroporphyrinogen decarboxylase from Alkalilimnicola ehrlichii (strain ATCC BAA-1101 / DSM 17681 / MLHE-1).